A 479-amino-acid chain; its full sequence is GTPase Obg (479 aa).

Residues 2–159 enclose the Obg domain; sequence TTFVDRVELH…QDIVLELKTV (158 aa). The tract at residues 61-87 is disordered; the sequence is HHKPHRSATNGKPGEGGNRSGKDGQDL. In terms of domain architecture, OBG-type G spans 160–331; it reads ADVALVGYPS…LSFALAELVG (172 aa). GTP is bound by residues 166–173, 191–195, 212–215, 283–286, and 312–314; these read GYPSAGKS, FTTLV, DVPG, NKID, and SAV. Positions 173 and 193 each coordinate Mg(2+). Residues 349 to 431 form the OCT domain; the sequence is PKAVDDAGFT…DNAVVFDWEP (83 aa). Residues 440-453 show a composition bias toward basic and acidic residues; that stretch reads LGRRGEDHRLDEPR. Positions 440–479 are disordered; it reads LGRRGEDHRLDEPRPAAQRRRDKQAERDDAEKEYDDFEPF. Acidic residues predominate over residues 470–479; sequence EKEYDDFEPF.

Belongs to the TRAFAC class OBG-HflX-like GTPase superfamily. OBG GTPase family. Monomer. Requires Mg(2+) as cofactor.

Its subcellular location is the cytoplasm. An essential GTPase which binds GTP, GDP and possibly (p)ppGpp with moderate affinity, with high nucleotide exchange rates and a fairly low GTP hydrolysis rate. Plays a role in control of the cell cycle, stress response, ribosome biogenesis and in those bacteria that undergo differentiation, in morphogenesis control. The sequence is that of GTPase Obg from Streptomyces avermitilis (strain ATCC 31267 / DSM 46492 / JCM 5070 / NBRC 14893 / NCIMB 12804 / NRRL 8165 / MA-4680).